The sequence spans 120 residues: Ribonuclease P protein component 2 (120 aa).

Belongs to the eukaryotic/archaeal RNase P protein component 2 family. In terms of assembly, consists of a catalytic RNA component and at least 4-5 protein subunits. Forms a subcomplex with Rnp3 which stimulates the catalytic RNA.

The protein localises to the cytoplasm. It carries out the reaction Endonucleolytic cleavage of RNA, removing 5'-extranucleotides from tRNA precursor.. Its function is as follows. Part of ribonuclease P, a protein complex that generates mature tRNA molecules by cleaving their 5'-ends. The RNA is catalytic, but its KM for pre-tRNA is 170-fold decreased in the presence of the 4 known protein subunits (Rnp1-4). The protein subunits also decrease the amount of Mg(2+) needed for activity. This Pyrococcus furiosus (strain ATCC 43587 / DSM 3638 / JCM 8422 / Vc1) protein is Ribonuclease P protein component 2.